We begin with the raw amino-acid sequence, 382 residues long: Na(+)/H(+) antiporter NhaA 2 (382 aa).

Helical transmembrane passes span 8–28 (FFSSPAAGGIVLIIASAAAII), 49–69 (LSVEHWINDALMAVFFMMVGL), 87–107 (ALPGFAALGGMAVPAAIYVWF), 115–135 (LAGWAIPAATDIAFALGVLAL), 146–166 (IFLSALAILDDMGAVAIIALF), 169–189 (SNISFLMLAGAAVTVALLFIM), 209–229 (FFMLQSGVHATIAGILLALFI), 252–272 (WVTFLILPLFGFANAGVALSG), 286–306 (VALGLFVGKQAGIFGLSLLAV), 325–345 (VSVLCGIGFTMSLFIGNLAFA), and 353–373 (EVKVGVLAGSVLAALAGMLIL).

It belongs to the NhaA Na(+)/H(+) (TC 2.A.33) antiporter family.

Its subcellular location is the cell inner membrane. The enzyme catalyses Na(+)(in) + 2 H(+)(out) = Na(+)(out) + 2 H(+)(in). Na(+)/H(+) antiporter that extrudes sodium in exchange for external protons. The sequence is that of Na(+)/H(+) antiporter NhaA 2 from Klebsiella pneumoniae subsp. pneumoniae (strain ATCC 700721 / MGH 78578).